The sequence spans 374 residues: Glutamate 5-kinase (374 aa).

K9 lines the ATP pocket. S49, D136, and N148 together coordinate substrate. Residues 168 to 169 and 210 to 216 each bind ATP; these read TD and TGGMRSK. In terms of domain architecture, PUA spans 276–354; the sequence is AGMITVDSGA…EEARQYSYLH (79 aa).

This sequence belongs to the glutamate 5-kinase family.

The protein localises to the cytoplasm. It catalyses the reaction L-glutamate + ATP = L-glutamyl 5-phosphate + ADP. Its pathway is amino-acid biosynthesis; L-proline biosynthesis; L-glutamate 5-semialdehyde from L-glutamate: step 1/2. Functionally, catalyzes the transfer of a phosphate group to glutamate to form L-glutamate 5-phosphate. The chain is Glutamate 5-kinase from Geobacillus kaustophilus (strain HTA426).